The sequence spans 247 residues: MADS-box protein defh21 (247 aa).

The 61-residue stretch at 1–61 (MGRGKIEVKR…GKLTEYCTPP (61 aa)) folds into the MADS-box domain. The 93-residue stretch at 91–183 (NDQVIKELTR…WLMSNQIQRQ (93 aa)) folds into the K-box domain.

In terms of tissue distribution, expressed exclusively in a few inner cell layers of the inner integuments of the ovules.

It localises to the nucleus. Its function is as follows. Probable transcription factor. This Antirrhinum majus (Garden snapdragon) protein is MADS-box protein defh21 (DEFH21).